The chain runs to 201 residues: Recombination protein RecR (201 aa).

The C4-type zinc finger occupies 60–75; sequence CRSCGNVDTSDPCTIC. In terms of domain architecture, Toprim spans 83 to 178; the sequence is TTLVVVEDVS…TVTRLAHGVP (96 aa).

This sequence belongs to the RecR family.

May play a role in DNA repair. It seems to be involved in an RecBC-independent recombinational process of DNA repair. It may act with RecF and RecO. The chain is Recombination protein RecR from Methylorubrum extorquens (strain CM4 / NCIMB 13688) (Methylobacterium extorquens).